The sequence spans 142 residues: Large ribosomal subunit protein uL11 (142 aa).

Belongs to the universal ribosomal protein uL11 family. In terms of assembly, part of the ribosomal stalk of the 50S ribosomal subunit. Interacts with L10 and the large rRNA to form the base of the stalk. L10 forms an elongated spine to which L12 dimers bind in a sequential fashion forming a multimeric L10(L12)X complex. Post-translationally, one or more lysine residues are methylated.

In terms of biological role, forms part of the ribosomal stalk which helps the ribosome interact with GTP-bound translation factors. The polypeptide is Large ribosomal subunit protein uL11 (Rhodopseudomonas palustris (strain BisA53)).